The chain runs to 688 residues: Elongation factor G (688 aa).

One can recognise a tr-type G domain in the interval 8 to 282; it reads ERTRNIGIMA…AVLDYLPAPT (275 aa). GTP-binding positions include 17–24, 81–85, and 135–138; these read AHIDAGKT, DTPGH, and NKMD.

This sequence belongs to the TRAFAC class translation factor GTPase superfamily. Classic translation factor GTPase family. EF-G/EF-2 subfamily.

The protein resides in the cytoplasm. Its function is as follows. Catalyzes the GTP-dependent ribosomal translocation step during translation elongation. During this step, the ribosome changes from the pre-translocational (PRE) to the post-translocational (POST) state as the newly formed A-site-bound peptidyl-tRNA and P-site-bound deacylated tRNA move to the P and E sites, respectively. Catalyzes the coordinated movement of the two tRNA molecules, the mRNA and conformational changes in the ribosome. In Clostridioides difficile (strain 630) (Peptoclostridium difficile), this protein is Elongation factor G.